Here is a 443-residue protein sequence, read N- to C-terminus: Amino-acid acetyltransferase (443 aa).

The region spanning 296–436 (EQIRRATIND…KMYNYQRRSK (141 aa)) is the N-acetyltransferase domain.

Belongs to the acetyltransferase family. ArgA subfamily. Homohexamer.

Its subcellular location is the cytoplasm. The catalysed reaction is L-glutamate + acetyl-CoA = N-acetyl-L-glutamate + CoA + H(+). It functions in the pathway amino-acid biosynthesis; L-arginine biosynthesis; N(2)-acetyl-L-ornithine from L-glutamate: step 1/4. The sequence is that of Amino-acid acetyltransferase from Salmonella arizonae (strain ATCC BAA-731 / CDC346-86 / RSK2980).